The chain runs to 628 residues: Somatic embryogenesis receptor kinase 2 (628 aa).

An N-terminal signal peptide occupies residues 1–29; it reads MGRKKFEAFGFVCLISLLLLFNSLWLASS. At 30–241 the chain is on the extracellular side; the sequence is NMEGDALHSL…PTPGGYSATG (212 aa). The PSKR1 binding stretch occupies residues 45 to 85; it reads DPNNVLQSWDPTLVNPCTWFHVTCNNENSVIRVDLGNADLS. Residues 56–58 form a CLE44 binding region; sequence TLV. A disulfide bridge links Cys-61 with Cys-68. 2 leucine-rich repeat receptor-like protein kinase binding regions span residues 62–81 and 100–105; these read TWFH…DLGN and YLELYS. A brassinolide-binding site is contributed by 64 to 65; the sequence is FH. LRR repeat units follow at residues 95-119, 121-143, 144-167, and 168-192; these read LKNL…LGNL, NLVS…LGKL, FKLR…LTNI, and MTLQ…SFSL. Residues Asn-107 and Asn-118 are each glycosylated (N-linked (GlcNAc...) asparagine). Leucine-rich repeat receptor-like protein kinase binding stretches follow at residues 126-129 and 148-150; these read DLYL and FLR. N-linked (GlcNAc...) asparagine glycans are attached at residues Asn-153 and Asn-187. A leucine-rich repeat receptor-like protein kinase binding region spans residues 174–197; that stretch reads DLSNNRLSGSVPDNGSFSLFTPIS. A disulfide bond links Cys-205 and Cys-213. The chain crosses the membrane as a helical span at residues 242–262; that stretch reads AIAGGVAAGAALLFAAPALAF. The Cytoplasmic segment spans residues 263 to 628; sequence AWWRRRKPQE…LHAMELSGPR (366 aa). Position 302 is a phosphothreonine (Thr-302). One can recognise a Protein kinase domain in the interval 305 to 592; the sequence is FSNKNILGRG…GLAEKWDEWQ (288 aa). 311-319 serves as a coordination point for ATP; it reads LGRGGFGKV. Thr-328 carries the phosphothreonine modification. Lys-333 provides a ligand contact to ATP. Phosphoserine is present on residues Ser-386 and Ser-389. Asp-432 serves as the catalytic Proton acceptor. 4 positions are modified to phosphothreonine: Thr-462, Thr-465, Thr-466, and Thr-471. A Phosphotyrosine modification is found at Tyr-479. The residue at position 481 (Ser-481) is a Phosphoserine. Thr-482 is modified (phosphothreonine). The residue at position 486 (Ser-486) is a Phosphoserine. A Phosphothreonine modification is found at Thr-562. Phosphoserine is present on Ser-604. Thr-616 is modified (phosphothreonine). A Phosphoserine modification is found at Ser-625.

The protein belongs to the protein kinase superfamily. Ser/Thr protein kinase family. Homo- and heterodimer. Component of the SERK1 signaling complex, composed of KAPP, CDC48A, GRF6 or GRF7, SERK1, SERK2, SERK3/BAK1 and BRI1. Bind to BRI1 in a brassinolide-dependent manner. Heterodimer with PSKR1. Interacts with the EF-Tu receptor EFR and FLS2 in a specific ligand-induced manner. Interacts with ERECTA in a EPF2-induced manner. Interacts with ERL1 in a EPF1-induced manner. Interacts with TMM. In the presence of the signal peptide RGF1, interacts with RGI3/RGFR1 and RGI4/RGFR2/SKM2. Binds to the peptide CLE44 in the presence of TDR. Post-translationally, autophosphorylated. As to expression, expressed in flowers, tapetum, developing microspores, all cells of the embryo sac, provascular strands and developing vascular bundles. Low expression in adult vascular tissue.

The protein resides in the cell membrane. The enzyme catalyses L-seryl-[protein] + ATP = O-phospho-L-seryl-[protein] + ADP + H(+). It catalyses the reaction L-threonyl-[protein] + ATP = O-phospho-L-threonyl-[protein] + ADP + H(+). In terms of biological role, serine/threonine-kinase involved in brassinosteroid-dependent and -independent signaling pathways. Acts redundantly with SERK1 as a control point for sporophytic development controlling male gametophyte production. Serves as coreceptor to small peptide (e.g. RGF1 and CLE44) signaling. Involved in the perception of phytosulfokine and subsequent signal transduction. In Arabidopsis thaliana (Mouse-ear cress), this protein is Somatic embryogenesis receptor kinase 2.